The following is a 404-amino-acid chain: Ethanolamine-phosphate cytidylyltransferase (404 aa).

Residues 173–201 (YADSFGKPPHPTPAGDTLSSEVSSQCPGG) are disordered. Positions 189–201 (TLSSEVSSQCPGG) are enriched in polar residues. CTP is bound by residues 239–240 (AF), 247–250 (HVDF), lysine 277, 325–328 (HGKT), and 354–358 (SGSDL). Serine 356 is modified (phosphoserine). Residues threonine 359 and threonine 360 each carry the phosphothreonine modification.

The protein belongs to the cytidylyltransferase family.

It catalyses the reaction phosphoethanolamine + CTP + H(+) = CDP-ethanolamine + diphosphate. It participates in phospholipid metabolism; phosphatidylethanolamine biosynthesis; phosphatidylethanolamine from ethanolamine: step 2/3. Functionally, ethanolamine-phosphate cytidylyltransferase that catalyzes the second step in the synthesis of phosphatidylethanolamine (PE) from ethanolamine via the CDP-ethanolamine pathway. Phosphatidylethanolamine is a dominant inner-leaflet phospholipid in cell membranes, where it plays a role in membrane function by structurally stabilizing membrane-anchored proteins, and participates in important cellular processes such as cell division, cell fusion, blood coagulation, and apoptosis. The protein is Ethanolamine-phosphate cytidylyltransferase (Pcyt2) of Mus musculus (Mouse).